The chain runs to 510 residues: Inositol-3-phosphate synthase (510 aa).

NAD(+) contacts are provided by glycine 70, glycine 71, asparagine 72, asparagine 73, aspartate 143, isoleucine 180, glutamine 190, arginine 193, threonine 230, alanine 231, asparagine 232, threonine 233, glycine 281, serine 282, aspartate 306, serine 309, asparagine 340, asparagine 341, aspartate 342, lysine 355, glycine 393, aspartate 394, aspartate 422, and serine 423.

It belongs to the myo-inositol 1-phosphate synthase family. The cofactor is NAD(+).

It localises to the cytoplasm. Its subcellular location is the cytosol. The protein localises to the nucleus. It catalyses the reaction D-glucose 6-phosphate = 1D-myo-inositol 3-phosphate. It functions in the pathway polyol metabolism; myo-inositol biosynthesis; myo-inositol from D-glucose 6-phosphate: step 1/2. In terms of biological role, key enzyme in myo-inositol biosynthesis pathway that catalyzes the conversion of glucose 6-phosphate to 1-myo-inositol 1-phosphate in a NAD-dependent manner. This Nicotiana tabacum (Common tobacco) protein is Inositol-3-phosphate synthase.